The following is a 291-amino-acid chain: Lipoyl synthase (291 aa).

[4Fe-4S] cluster is bound by residues Cys-43, Cys-48, Cys-54, Cys-69, Cys-73, Cys-76, and Ser-280. A Radical SAM core domain is found at 55–269; it reads FSSRTATFLI…AAYGRARGIP (215 aa).

Belongs to the radical SAM superfamily. Lipoyl synthase family. [4Fe-4S] cluster is required as a cofactor.

Its subcellular location is the cytoplasm. The enzyme catalyses [[Fe-S] cluster scaffold protein carrying a second [4Fe-4S](2+) cluster] + N(6)-octanoyl-L-lysyl-[protein] + 2 oxidized [2Fe-2S]-[ferredoxin] + 2 S-adenosyl-L-methionine + 4 H(+) = [[Fe-S] cluster scaffold protein] + N(6)-[(R)-dihydrolipoyl]-L-lysyl-[protein] + 4 Fe(3+) + 2 hydrogen sulfide + 2 5'-deoxyadenosine + 2 L-methionine + 2 reduced [2Fe-2S]-[ferredoxin]. It participates in protein modification; protein lipoylation via endogenous pathway; protein N(6)-(lipoyl)lysine from octanoyl-[acyl-carrier-protein]: step 2/2. In terms of biological role, catalyzes the radical-mediated insertion of two sulfur atoms into the C-6 and C-8 positions of the octanoyl moiety bound to the lipoyl domains of lipoate-dependent enzymes, thereby converting the octanoylated domains into lipoylated derivatives. This chain is Lipoyl synthase, found in Oleidesulfovibrio alaskensis (strain ATCC BAA-1058 / DSM 17464 / G20) (Desulfovibrio alaskensis).